The following is a 127-amino-acid chain: Riboflavin kinase (127 aa).

10–15 lines the CDP pocket; sequence GLGEGK. Positions 39 and 41 each coordinate Mg(2+). Residues Thr-96 and Glu-104 each contribute to the FMN site. 109 to 112 is a CDP binding site; the sequence is IQLR.

The protein belongs to the archaeal riboflavin kinase family. It depends on Mg(2+) as a cofactor.

The catalysed reaction is riboflavin + CTP = CDP + FMN + H(+). It functions in the pathway cofactor biosynthesis; FMN biosynthesis; FMN from riboflavin (CTP route): step 1/1. In terms of biological role, catalyzes the CTP-dependent phosphorylation of riboflavin (vitamin B2) to form flavin mononucleotide (FMN). The sequence is that of Riboflavin kinase from Methanococcus maripaludis (strain DSM 14266 / JCM 13030 / NBRC 101832 / S2 / LL).